The sequence spans 2606 residues: Large tegument protein deneddylase (2606 aa).

The segment at 1 to 235 is deubiquitination activity; sequence MAFQAQTDTG…LKRSGAYVNL (235 aa). A Peptidase C76 domain is found at 14–225; sequence LATASSHQGD…LLANYGIASA (212 aa). Residues C34, D163, and H165 contribute to the active site. Disordered regions lie at residues 318–349, 390–411, 1020–1135, 2253–2316, and 2434–2458; these read IAISPLHSNTESDDSETGKKNTPVKITKPNEA, DTDSLLSTHESPPATPSLKSGQ, KKGL…ESSE, PEIH…PTPL, and PPHDFVEPVENGDPPGPPGSEERKY. Residues 1038–1050 are compositionally biased toward polar residues; sequence TPVTDSKLIQDSQ. Positions 1051–1061 are enriched in basic and acidic residues; the sequence is QNDRHQKEKPL. Polar residues predominate over residues 1085–1097; the sequence is KPQNLSLPVSTNK. Positions 1105–1132 are enriched in low complexity; the sequence is ESSPIESTSPSHSPVSSMESQNGSFSLE. Pro residues predominate over residues 2304 to 2316; sequence PNPPRPTTFPTPL.

The protein belongs to the herpesviridae large tegument protein family. Interacts with host CUL1 and CUL4A; these interactions inhibit the E3 ligase activity of cullins. Interacts with inner tegument protein. Interacts with capsid vertex specific component CVC2. Interacts with the major capsid protein/MCP.

The protein resides in the virion tegument. Its subcellular location is the host cytoplasm. The protein localises to the host nucleus. The enzyme catalyses Thiol-dependent hydrolysis of ester, thioester, amide, peptide and isopeptide bonds formed by the C-terminal Gly of ubiquitin (a 76-residue protein attached to proteins as an intracellular targeting signal).. In terms of biological role, large tegument protein that plays multiple roles in the viral cycle. During viral entry, remains associated with the capsid while most of the tegument is detached and participates in the capsid transport toward the host nucleus. Plays a role in the routing of the capsid at the nuclear pore complex and subsequent uncoating. Within the host nucleus, acts as a deneddylase and promotes the degradation of nuclear CRLs (cullin-RING ubiquitin ligases) and thereby stabilizes nuclear CRL substrates, while cytoplasmic CRLs remain unaffected. These modifications prevent host cell cycle S-phase progression and create a favorable environment allowing efficient viral genome replication. Participates later in the secondary envelopment of capsids. Indeed, plays a linker role for the association of the outer viral tegument to the capsids together with the inner tegument protein. This is Large tegument protein deneddylase (64) from Connochaetes taurinus (Blue wildebeest).